Consider the following 579-residue polypeptide: MNASKLPLGSFVGTTLLLFILYKLVKLAYYVGQAKKTGLPYTLVPVLETEFLGKLLTPLIRPLFTSRLSRGEGWPRWIRFSILDWAWEEKRRVHEELGDVFLLVSPEGLICYTADADMCWDVMNRRNEFLKPRDKYKVLEPYGPNVATTEGKAYNFHVRITAPPFNDGSGANDLVWNEASDQARALMESWSQENTTRDLSLDINRLTLAVISYTGFGKRLDFETEVSDLRNKIPPGYKMSLHHALHLVTTFMVKILLIPKWIMKMTSMKEIAIAHGELEKYMREMIRTETAKLSKDSEYQSADAKGNLLTSVLRASAFEAKAAGRKQAFSEDEVLGNLFLYLLAGYETTANAMTYGFITLALRQDLQDRIIQEVDGVYAEAAAEGRTSLNYTDDFEKFQYTYGFMYEVFRLYPGVCIITKMVPKDTTITVYPENNSPQQHVLPAECRVYLNVNAVHYHERYWPDPWALKPDRWMGTIGVTPNSRPNKKVVAQDKSRQVRGTLMTFSGGARACLGRKFTQSEYISVLATVLGKYRIVLGEGMDAKVVKQEIDHLAAGTVTLAPLKYVKLALKKRTDVKTG.

N2 carries N-linked (GlcNAc...) asparagine glycosylation. The chain crosses the membrane as a helical span at residues 7-29 (PLGSFVGTTLLLFILYKLVKLAY). N194 and N390 each carry an N-linked (GlcNAc...) asparagine glycan. C512 contributes to the heme binding site.

This sequence belongs to the cytochrome P450 family. It depends on heme as a cofactor.

Its subcellular location is the membrane. The protein operates within sesquiterpene biosynthesis. Cytochrome P450 monooxygenase; part of the gene cluster that mediates the biosynthesis of PR-toxin, a bicyclic sesquiterpene belonging to the eremophilane class and acting as a mycotoxin. The first step of the pathway is catalyzed by the aristolochene synthase which performs the cyclization of trans,trans-farnesyl diphosphate (FPP) to the bicyclic sesquiterpene aristolochene. Following the formation of aristolochene, the non-oxygenated aristolochene is converted to the trioxygenated intermediate eremofortin B, via 7-epi-neopetasone. This conversion appears to involve three enzymes, a hydroxysterol oxidase-like enzyme, the quinone-oxidase prx3 that forms the quinone-type-structure in the bicyclic nucleus of aristolochene with the C8-oxo group and the C-3 hydroxyl group, and the P450 monooxygenase ORF6 that introduces the epoxide at the double bond between carbons 1 and 2. No monoxy or dioxy-intermediates have been reported to be released to the broth, so these three early oxidative reactions may be coupled together. Eremofortin B is further oxidized by another P450 monooxygenase, that introduces a second epoxide between carbons 7 and 11 prior to acetylation to eremofortin A by the acetyltransferase ORF8. The second epoxidation may be performed by a second P450 monooxygenase. After the acetylation step, eremofortin A is converted to eremofortin C and then to PR-toxin. First the conversion of eremofortin A to eremofortin C proceeds by oxidation of the side chain of the molecule at C-12 and is catalyzed by the short-chain oxidoreductase prx1. The cytochrome P450 monooxygenase ORF6 is probably also involved in this step. The primary alcohol formed at C-12 is finally oxidized by the short-chain alcohol dehydrogenase prx4 that forms PR-toxin. The protein is Cytochrome P450 monooxygenase ORF6 of Penicillium roqueforti (strain FM164).